A 395-amino-acid chain; its full sequence is Small RNA 2'-O-methyltransferase (395 aa).

S-adenosyl-L-methionine-binding residues include aspartate 79 and serine 115. Mg(2+) is bound by residues glutamate 133, glutamate 136, histidine 137, and histidine 182.

Belongs to the methyltransferase superfamily. HEN1 family. Mg(2+) serves as cofactor. Specifically expressed in testis.

The protein localises to the cytoplasm. The enzyme catalyses small RNA 3'-end nucleotide + S-adenosyl-L-methionine = small RNA 3'-end 2'-O-methylnucleotide + S-adenosyl-L-homocysteine + H(+). Methyltransferase that adds a 2'-O-methyl group at the 3'-end of piRNAs, a class of 24 to 30 nucleotide RNAs that are generated by a Dicer-independent mechanism and are primarily derived from transposons and other repeated sequence elements. This probably protects the 3'-end of piRNAs from uridylation activity and subsequent degradation. Stabilization of piRNAs is essential for gametogenesis. The polypeptide is Small RNA 2'-O-methyltransferase (Henmt1) (Mus musculus (Mouse)).